Here is a 208-residue protein sequence, read N- to C-terminus: Putative speedy protein E7 (208 aa).

This sequence belongs to the Speedy/Ringo family.

The sequence is that of Putative speedy protein E7 (SPDYE7P) from Homo sapiens (Human).